We begin with the raw amino-acid sequence, 634 residues long: Threonine--tRNA ligase (634 aa).

A TGS domain is found at 1–61; it reads MINIRFPDGS…NSNCELRLIT (61 aa). The catalytic stretch occupies residues 241-532; sequence DHRKIGKVLD…LIEHYAGNLP (292 aa). Zn(2+) contacts are provided by cysteine 332, histidine 383, and histidine 509.

It belongs to the class-II aminoacyl-tRNA synthetase family. In terms of assembly, homodimer. Zn(2+) serves as cofactor.

It localises to the cytoplasm. The catalysed reaction is tRNA(Thr) + L-threonine + ATP = L-threonyl-tRNA(Thr) + AMP + diphosphate + H(+). Functionally, catalyzes the attachment of threonine to tRNA(Thr) in a two-step reaction: L-threonine is first activated by ATP to form Thr-AMP and then transferred to the acceptor end of tRNA(Thr). Also edits incorrectly charged L-seryl-tRNA(Thr). The polypeptide is Threonine--tRNA ligase (Francisella tularensis subsp. tularensis (strain WY96-3418)).